We begin with the raw amino-acid sequence, 213 residues long: Uridine kinase (213 aa).

15–22 (GASASGKS) lines the ATP pocket.

It belongs to the uridine kinase family.

The protein localises to the cytoplasm. The enzyme catalyses uridine + ATP = UMP + ADP + H(+). It carries out the reaction cytidine + ATP = CMP + ADP + H(+). The protein operates within pyrimidine metabolism; CTP biosynthesis via salvage pathway; CTP from cytidine: step 1/3. Its pathway is pyrimidine metabolism; UMP biosynthesis via salvage pathway; UMP from uridine: step 1/1. This chain is Uridine kinase, found in Yersinia enterocolitica serotype O:8 / biotype 1B (strain NCTC 13174 / 8081).